The primary structure comprises 337 residues: MSKSLRVGVVGAGAMGADHIDRINNRTSGAHISAIIEPDAARAAAAAEDAPGAQAFTRIEDAIAADAVDAVLIAVPGQFHEPVLVPALEAGLPILCEKPLTPDSESSLRIVELEQKLDKPHIQVGFMRRFDPEYNNLRKLVESGEAGELLMLRGLHRNPSVGESYTQSMLITDSVVHEFDVIPWLAGSRVVSVEVKYPKTSSLAHSGLKEPILVIMELENGVLVDVEMNVNIQFGYQVATEAVFEKGLARIGQPSGMQRWRDGEFLINEHTDFTTRFATAYDRQIQSWVDAVHEGTLVAGPNAWDGYLVALSCEAGVKALDGGVIPVDAAPRPDFYA.

The protein belongs to the Gfo/Idh/MocA family. As to quaternary structure, homotetramer.

The enzyme catalyses myo-inositol + NAD(+) = scyllo-inosose + NADH + H(+). In terms of biological role, involved in the oxidation of myo-inositol (MI) to 2-keto-myo-inositol (2KMI or 2-inosose). The sequence is that of Inositol 2-dehydrogenase from Corynebacterium glutamicum (strain ATCC 13032 / DSM 20300 / JCM 1318 / BCRC 11384 / CCUG 27702 / LMG 3730 / NBRC 12168 / NCIMB 10025 / NRRL B-2784 / 534).